A 131-amino-acid polypeptide reads, in one-letter code: C-C motif chemokine 21 (131 aa).

The N-terminal stretch at 1–23 (MAQSLALSLLILVLAFGIPGTQG) is a signal peptide. 3 cysteine pairs are disulfide-bonded: cysteine 31–cysteine 57, cysteine 32–cysteine 75, and cysteine 103–cysteine 119. The tract at residues 89-131 (HLDKTPTPRKPVQGCRKDRGVPKNGKKGKGCKRTEQSQTPKGP) is disordered.

This sequence belongs to the intercrine beta (chemokine CC) family. As to quaternary structure, monomer. Binds to CCR7. Interacts with PDPN; relocalizes PDPN to the basolateral membrane. Interacts with TNFAIP6 (via Link domain). Interacts with GPR174.

Its subcellular location is the secreted. In terms of biological role, inhibits hemopoiesis and stimulates chemotaxis. Chemotactic in vitro for thymocytes and activated T-cells, but not for B-cells, macrophages, or neutrophils. Shows preferential activity towards naive T-cells. May play a role in mediating homing of lymphocytes to secondary lymphoid organs. Binds to atypical chemokine receptor ACKR4 and mediates the recruitment of beta-arrestin (ARRB1/2) to ACKR4. This Macaca mulatta (Rhesus macaque) protein is C-C motif chemokine 21 (CCL21).